Here is a 242-residue protein sequence, read N- to C-terminus: Carboxy-S-adenosyl-L-methionine synthase (242 aa).

S-adenosyl-L-methionine is bound by residues Y39, 64-66 (GCS), 89-90 (DN), 117-118 (DI), N132, and R199.

The protein belongs to the class I-like SAM-binding methyltransferase superfamily. Cx-SAM synthase family. In terms of assembly, homodimer.

The catalysed reaction is prephenate + S-adenosyl-L-methionine = carboxy-S-adenosyl-L-methionine + 3-phenylpyruvate + H2O. Catalyzes the conversion of S-adenosyl-L-methionine (SAM) to carboxy-S-adenosyl-L-methionine (Cx-SAM). The protein is Carboxy-S-adenosyl-L-methionine synthase of Aliivibrio fischeri (strain ATCC 700601 / ES114) (Vibrio fischeri).